We begin with the raw amino-acid sequence, 51 residues long: Insulin (51 aa).

Cystine bridges form between C7/C37, C19/C50, and C36/C41.

Belongs to the insulin family. Heterodimer of a B chain and an A chain linked by two disulfide bonds.

The protein localises to the secreted. In terms of biological role, insulin decreases blood glucose concentration. It increases cell permeability to monosaccharides, amino acids and fatty acids. It accelerates glycolysis, the pentose phosphate cycle, and glycogen synthesis in liver. This Anguilla rostrata (American eel) protein is Insulin (ins).